Reading from the N-terminus, the 206-residue chain is Somatotropin (206 aa).

A signal peptide spans 1–22 (MAGLHFFPALLALLMASLQTHQ). Disulfide bonds link C75–C179 and C196–C204.

It belongs to the somatotropin/prolactin family.

It is found in the secreted. Growth hormone plays an important role in growth control and is involved in the regulation of several anabolic processes. Implicated as an osmoregulatory substance important for seawater adaptation. The sequence is that of Somatotropin (gh) from Protopterus annectens (African lungfish).